The primary structure comprises 420 residues: MDFLRIEGGKTLNGSVPISGAKNAALPLIASTILSKQSVQIDNLPDVQDIKTLLRLLQNLGASYQYEDGLATIDASKLTSTVATYDIVRTMRASILVLGPILAKYGRCEVSLPGGCAIGQRPIDLHLQALEQMGAKITIKAGYVVAEAPNGLKGSTIIFDKITVTGTENIVMAAALAKGTTTIINAAKEPEVVQLCEVLKDAGVQIDGIGSDELIIEGTDREPIEMRAIHVIPDRIEAGTYLCAGAITNSTLSIENVIPHHLDSVLVKLKQMGFPLDVNESNITIHPARTIEPVEIVTSEYPGFPTDMQAQFMALALLANGASIIEERLFENRFMHVSELKRFGANIQLKGNIATVIGPTELWGADVMATDLRASSALVLAGLAAKGTTNVHRIYHLDRGYEKLEEKLNALGANIQRLSE.

22 to 23 provides a ligand contact to phosphoenolpyruvate; the sequence is KN. Position 92 (arginine 92) interacts with UDP-N-acetyl-alpha-D-glucosamine. The active-site Proton donor is cysteine 116. Position 116 is a 2-(S-cysteinyl)pyruvic acid O-phosphothioketal (cysteine 116). Residues 121–125, aspartate 307, and leucine 329 each bind UDP-N-acetyl-alpha-D-glucosamine; that span reads RPIDL.

The protein belongs to the EPSP synthase family. MurA subfamily.

The protein localises to the cytoplasm. It carries out the reaction phosphoenolpyruvate + UDP-N-acetyl-alpha-D-glucosamine = UDP-N-acetyl-3-O-(1-carboxyvinyl)-alpha-D-glucosamine + phosphate. It functions in the pathway cell wall biogenesis; peptidoglycan biosynthesis. Functionally, cell wall formation. Adds enolpyruvyl to UDP-N-acetylglucosamine. This chain is UDP-N-acetylglucosamine 1-carboxyvinyltransferase, found in Nitratiruptor sp. (strain SB155-2).